The primary structure comprises 395 residues: Pyruvate synthase subunit PorA (395 aa).

In terms of assembly, heterotetramer of one alpha, one beta, one delta and one gamma chain.

It carries out the reaction 2 oxidized [2Fe-2S]-[ferredoxin] + pyruvate + CoA = 2 reduced [2Fe-2S]-[ferredoxin] + acetyl-CoA + CO2 + H(+). This chain is Pyruvate synthase subunit PorA (porA), found in Pyrococcus abyssi (strain GE5 / Orsay).